We begin with the raw amino-acid sequence, 200 residues long: Nascent polypeptide-associated complex subunit alpha (200 aa).

Residues 1 to 19 (MADPRVEELPEEEVKKTQV) are compositionally biased toward basic and acidic residues. Disordered stretches follow at residues 1-54 (MADP…NEKK) and 118-165 (AAQQ…EDKD). The span at 20 to 34 (EDLDNSSDDESDIEA) shows a compositional bias: acidic residues. One can recognise an NAC-A/B domain in the interval 49 to 114 (SRNEKKARKA…AKIEDLNASA (66 aa)). Basic and acidic residues predominate over residues 127-146 (AEHDHAGHTHEHEEAGKAKE). Acidic residues predominate over residues 147–160 (EEEEDEGEEVDAEG). In terms of domain architecture, UBA spans 161–200 (IEDKDIELVMTQANVSRKKAIKALKENDNDIVNSIMALSI).

It belongs to the NAC-alpha family. Part of the nascent polypeptide-associated complex (NAC), consisting of npc-1/egd2 and npc-2/egd1. NAC associates with ribosomes via npc-2/egd1.

The protein localises to the cytoplasm. Its subcellular location is the nucleus. Its function is as follows. Component of the nascent polypeptide-associated complex (NAC), a dynamic component of the ribosomal exit tunnel, protecting the emerging polypeptides from interaction with other cytoplasmic proteins to ensure appropriate nascent protein targeting. The NAC complex also promotes mitochondrial protein import by enhancing productive ribosome interactions with the outer mitochondrial membrane and blocks the inappropriate interaction of ribosomes translating non-secretory nascent polypeptides with translocation sites in the membrane of the endoplasmic reticulum. Npc-1/egd2 may also be involved in transcription regulation. In Neurospora crassa (strain ATCC 24698 / 74-OR23-1A / CBS 708.71 / DSM 1257 / FGSC 987), this protein is Nascent polypeptide-associated complex subunit alpha (npc-1).